We begin with the raw amino-acid sequence, 248 residues long: Myelin protein P0 (248 aa).

The first 29 residues, 1–29 (MAPGAPSSSPSPILAALLFSSLVLSPALA), serve as a signal peptide directing secretion. In terms of domain architecture, Ig-like V-type spans 30-143 (IVVYTDREIY…DIVGKTSQVT (114 aa)). Residues 30–153 (IVVYTDREIY…LYVFEKVPTR (124 aa)) are Extracellular-facing. A disulfide bridge links Cys50 with Cys127. Asn122 carries an N-linked (GlcNAc...) (complex) asparagine glycan. Residues 154–179 (YGVVLGAVIGGILGVVLLLLLLFYLI) form a helical membrane-spanning segment. At 180–248 (RYCWLRRQAA…GLGESRKDKK (69 aa)) the chain is on the cytoplasmic side. The residue at position 210 (Ser210) is a Phosphoserine; by PKC. Residues 222–248 (MLDHSRSTKAASEKKSKGLGESRKDKK) are disordered. Positions 224 to 248 (DHSRSTKAASEKKSKGLGESRKDKK) are enriched in basic and acidic residues. 2 positions are modified to phosphoserine: Ser226 and Ser228. The residue at position 233 (Ser233) is a Phosphoserine; by PKC. Residues Ser237 and Ser243 each carry the phosphoserine modification.

Belongs to the myelin P0 protein family. In terms of assembly, homodimer and homotetramer. Post-translationally, N-glycosylated; contains sulfate-substituted glycan. As to expression, found only in peripheral nervous system Schwann cells.

The protein localises to the cell membrane. In terms of biological role, is an adhesion molecule necessary for normal myelination in the peripheral nervous system. It mediates adhesion between adjacent myelin wraps and ultimately drives myelin compaction. In Mus musculus (Mouse), this protein is Myelin protein P0 (Mpz).